A 423-amino-acid chain; its full sequence is Gamma-glutamyl phosphate reductase (423 aa).

The segment covering Met1–Gln14 has biased composition (low complexity). Residues Met1–Asp25 are disordered. Positions Arg15 to Asp25 are enriched in basic and acidic residues.

The protein belongs to the gamma-glutamyl phosphate reductase family.

The protein localises to the cytoplasm. The catalysed reaction is L-glutamate 5-semialdehyde + phosphate + NADP(+) = L-glutamyl 5-phosphate + NADPH + H(+). The protein operates within amino-acid biosynthesis; L-proline biosynthesis; L-glutamate 5-semialdehyde from L-glutamate: step 2/2. Functionally, catalyzes the NADPH-dependent reduction of L-glutamate 5-phosphate into L-glutamate 5-semialdehyde and phosphate. The product spontaneously undergoes cyclization to form 1-pyrroline-5-carboxylate. This chain is Gamma-glutamyl phosphate reductase, found in Mycobacterium marinum (strain ATCC BAA-535 / M).